We begin with the raw amino-acid sequence, 252 residues long: Trans-aconitate 2-methyltransferase (252 aa).

Belongs to the methyltransferase superfamily. Tam family.

It localises to the cytoplasm. The catalysed reaction is trans-aconitate + S-adenosyl-L-methionine = (E)-3-(methoxycarbonyl)pent-2-enedioate + S-adenosyl-L-homocysteine. In terms of biological role, catalyzes the S-adenosylmethionine monomethyl esterification of trans-aconitate. This chain is Trans-aconitate 2-methyltransferase, found in Escherichia coli O6:H1 (strain CFT073 / ATCC 700928 / UPEC).